A 215-amino-acid chain; its full sequence is MOB kinase activator-like 1A (215 aa).

A disordered region spans residues 1–27 (MSLFGLGRNQKTFRPKKSAPSGSKGAQ). The Zn(2+) site is built by Cys-79, Cys-84, His-161, and His-166.

This sequence belongs to the MOB1/phocein family. In terms of assembly, interacts with SIK1 at the plasma membrane and in the nucleus. In terms of tissue distribution, constitutively expressed. In 3- to 4-day-old seedlings, expression is high in the shoot apical meristem and along the vasculature in cotyledons, hypocotyls and roots. At the root tip, expression is detected in columella and lateral root cap cells as well as in the stem cell niche around the quiescent center (QC). The levels of expression decrease progressively in the meristematic zone from the root tip towards the base of the root, becoming stronger again in the elongation zone. In flowers, expression appears localized in ovules and pollen.

It is found in the nucleus. It localises to the cell membrane. Its subcellular location is the vacuole membrane. Plays a key role in regulation of cell expansion and cell division. Required for proper plant development, the correct patterning of the root meristem and the control of root growth. Involved in both sporogenesis and gametogenesis. In Arabidopsis thaliana (Mouse-ear cress), this protein is MOB kinase activator-like 1A.